The sequence spans 170 residues: Photosystem I assembly protein Ycf3 (170 aa).

TPR repeat units lie at residues 35 to 69 (AFTY…EIDP), 73 to 106 (SYIL…NPSL), and 121 to 154 (GEQA…APGN).

Belongs to the Ycf3 family.

It localises to the plastid. It is found in the chloroplast thylakoid membrane. Essential for the assembly of the photosystem I (PSI) complex. May act as a chaperone-like factor to guide the assembly of the PSI subunits. The sequence is that of Photosystem I assembly protein Ycf3 from Cycas taitungensis (Prince sago).